We begin with the raw amino-acid sequence, 1150 residues long: Cell division cycle and apoptosis regulator protein 1 (1150 aa).

The interaction with AR stretch occupies residues 1–249; the sequence is MAQFGGQKNP…TQPQPQSLLQ (249 aa). Disordered stretches follow at residues 124-146 and 285-354; these read PTAQ…QPQK and IVSQ…SPRR. The span at 134 to 146 shows a compositional bias: low complexity; sequence TPRSSQQQTQPQK. The interval 203–660 is interaction with GATA2; the sequence is QRIQTLPNQN…RALSSKGLKS (458 aa). Basic and acidic residues-rich tracts occupy residues 293 to 334 and 341 to 352; these read RRLD…ERSP and ERSPRRERERSP. Residue S456 is modified to Phosphoserine. Residues 594 to 618 adopt a coiled-coil conformation; the sequence is KQQLVEKLQGERKEADGEQDEEEKD. Residues 600 to 638 form a disordered region; the sequence is KLQGERKEADGEQDEEEKDDGEAKEISTPTHWSKLDPKT. Acidic residues predominate over residues 610–621; sequence GEQDEEEKDDGE. T627 carries the phosphothreonine modification. Residues 636-670 form the SAP domain; that stretch reads PKTMKVNDLRKELESRALSSKGLKSQLIARLTKQL. A Glycyl lysine isopeptide (Lys-Gly) (interchain with G-Cter in ubiquitin) cross-link involves residue K637. Residues 643 to 1150 are interaction with GATA1; that stretch reads DLRKELESRA…QKSKENGASV (508 aa). T667 bears the Phosphothreonine mark. 4 stretches are compositionally biased toward basic and acidic residues: residues 673-687, 694-713, 796-817, and 832-855; these read EEQK…KSEK, DRKS…EEIE, KEDK…KKEE, and SGDD…KDDS. 2 disordered regions span residues 673–713 and 796–915; these read EEQK…EEIE and KEDK…EKEK. Phosphoserine is present on residues S685 and S697. Acidic residues predominate over residues 856–889; that stretch reads KDDDETEEDNNQDEYDPMEAEEAEDEEDDRDEEE. Phosphothreonine is present on T861. Positions 890–915 are enriched in basic and acidic residues; the sequence is MTKRDDKRDINRYCKERPSKDKEKEK. K1012 participates in a covalent cross-link: Glycyl lysine isopeptide (Lys-Gly) (interchain with G-Cter in SUMO1); alternate. A Glycyl lysine isopeptide (Lys-Gly) (interchain with G-Cter in SUMO2); alternate cross-link involves residue K1012. Residues 1033–1114 adopt a coiled-coil conformation; the sequence is DVGSLLQKLE…LQFENQMNKT (82 aa). Glycyl lysine isopeptide (Lys-Gly) (interchain with G-Cter in SUMO2) cross-links involve residues K1067 and K1135.

In terms of assembly, directly interacts with ESR1, NR3C1 and p53/TP53. Interacts (via N-terminus) with CALCOCO1. Interacts with MED1. Interacts with GATA1. Interacts with AR and GATA2. In terms of tissue distribution, expressed in various epithelial cancer cell lines, including breast, colon, prostate, pancreatic and leukemia. Expression is regulated by growth factors.

The protein localises to the cytoplasm. It localises to the perinuclear region. Functionally, associates with components of the Mediator and p160 coactivator complexes that play a role as intermediaries transducing regulatory signals from upstream transcriptional activator proteins to basal transcription machinery at the core promoter. Recruited to endogenous nuclear receptor target genes in response to the appropriate hormone. Also functions as a p53 coactivator. May thus play an important role in transcriptional regulation. May be involved in apoptosis signaling in the presence of the reinoid CD437. Apoptosis induction involves sequestration of 14-3-3 protein(s) and mediated altered expression of multiple cell cycle regulatory genes including MYC, CCNB1 and CDKN1A. Plays a role in cell cycle progression and/or cell proliferation. In association with CALCOCO1 enhances GATA1- and MED1-mediated transcriptional activation from the gamma-globin promoter during erythroid differentiation of K562 erythroleukemia cells. Can act as a both a coactivator and corepressor of AR-mediated transcription. Contributes to chromatin looping and AR transcription complex assembly by stabilizing AR-GATA2 association on chromatin and facilitating MED1 and RNA polymerase II recruitment to AR-binding sites. May play an important role in the growth and tumorigenesis of prostate cancer cells. This chain is Cell division cycle and apoptosis regulator protein 1 (CCAR1), found in Homo sapiens (Human).